The sequence spans 88 residues: Putative defensin-like protein 256 (88 aa).

The first 25 residues, 1-25 (MKSSIFFKLLLLVSLLVVIFRQSYA), serve as a signal peptide directing secretion. 3 cysteine pairs are disulfide-bonded: Cys30–Cys46, Cys36–Cys53, and Cys40–Cys55.

This sequence belongs to the DEFL family.

It localises to the secreted. The chain is Putative defensin-like protein 256 from Arabidopsis thaliana (Mouse-ear cress).